The sequence spans 212 residues: Pyridoxine/pyridoxamine 5'-phosphate oxidase (212 aa).

Substrate is bound by residues 8 to 11 and lysine 66; that span reads RRSY. Residues 61–66, 76–77, arginine 82, lysine 83, and glutamine 105 contribute to the FMN site; these read RIVLLK and FT. The substrate site is built by tyrosine 123, arginine 127, and serine 131. Residues 140–141 and tryptophan 184 each bind FMN; that span reads QS. 190-192 provides a ligand contact to substrate; the sequence is RLH. Residue arginine 194 participates in FMN binding.

Belongs to the pyridoxamine 5'-phosphate oxidase family. Homodimer. Requires FMN as cofactor.

The catalysed reaction is pyridoxamine 5'-phosphate + O2 + H2O = pyridoxal 5'-phosphate + H2O2 + NH4(+). It catalyses the reaction pyridoxine 5'-phosphate + O2 = pyridoxal 5'-phosphate + H2O2. It participates in cofactor metabolism; pyridoxal 5'-phosphate salvage; pyridoxal 5'-phosphate from pyridoxamine 5'-phosphate: step 1/1. It functions in the pathway cofactor metabolism; pyridoxal 5'-phosphate salvage; pyridoxal 5'-phosphate from pyridoxine 5'-phosphate: step 1/1. Functionally, catalyzes the oxidation of either pyridoxine 5'-phosphate (PNP) or pyridoxamine 5'-phosphate (PMP) into pyridoxal 5'-phosphate (PLP). The protein is Pyridoxine/pyridoxamine 5'-phosphate oxidase of Cupriavidus necator (strain ATCC 17699 / DSM 428 / KCTC 22496 / NCIMB 10442 / H16 / Stanier 337) (Ralstonia eutropha).